The following is a 451-amino-acid chain: tRNA-2-methylthio-N(6)-dimethylallyladenosine synthase (451 aa).

Residues 5-121 (RQYHITTFGC…LQDLLEQVEG (117 aa)) enclose the MTTase N-terminal domain. 6 residues coordinate [4Fe-4S] cluster: C14, C50, C84, C156, C160, and C163. A Radical SAM core domain is found at 142–379 (RDSTVTAWVN…NHLVAQKAAE (238 aa)). The TRAM domain occupies 382-446 (QRYAGRIEEV…AFSLTGEAVE (65 aa)).

This sequence belongs to the methylthiotransferase family. MiaB subfamily. As to quaternary structure, monomer. The cofactor is [4Fe-4S] cluster.

The protein resides in the cytoplasm. It catalyses the reaction N(6)-dimethylallyladenosine(37) in tRNA + (sulfur carrier)-SH + AH2 + 2 S-adenosyl-L-methionine = 2-methylsulfanyl-N(6)-dimethylallyladenosine(37) in tRNA + (sulfur carrier)-H + 5'-deoxyadenosine + L-methionine + A + S-adenosyl-L-homocysteine + 2 H(+). Its function is as follows. Catalyzes the methylthiolation of N6-(dimethylallyl)adenosine (i(6)A), leading to the formation of 2-methylthio-N6-(dimethylallyl)adenosine (ms(2)i(6)A) at position 37 in tRNAs that read codons beginning with uridine. The chain is tRNA-2-methylthio-N(6)-dimethylallyladenosine synthase from Picosynechococcus sp. (strain ATCC 27264 / PCC 7002 / PR-6) (Agmenellum quadruplicatum).